The primary structure comprises 227 residues: Fibrillarin-like rRNA/tRNA 2'-O-methyltransferase (227 aa).

S-adenosyl-L-methionine-binding positions include 86–87 (TT), 105–106 (EF), 130–131 (DA), and 150–153 (DVAQ).

The protein belongs to the methyltransferase superfamily. Fibrillarin family. Interacts with nop5. Component of box C/D small ribonucleoprotein (sRNP) particles that contain rpl7ae, FlpA and nop5, plus a guide RNA.

Involved in pre-rRNA and tRNA processing. Utilizes the methyl donor S-adenosyl-L-methionine to catalyze the site-specific 2'-hydroxyl methylation of ribose moieties in rRNA and tRNA. Site specificity is provided by a guide RNA that base pairs with the substrate. Methylation occurs at a characteristic distance from the sequence involved in base pairing with the guide RNA. This chain is Fibrillarin-like rRNA/tRNA 2'-O-methyltransferase, found in Pyrococcus abyssi (strain GE5 / Orsay).